We begin with the raw amino-acid sequence, 171 residues long: S-ribosylhomocysteine lyase (171 aa).

Residues His54, His58, and Cys128 each coordinate Fe cation.

This sequence belongs to the LuxS family. As to quaternary structure, homodimer. Fe cation is required as a cofactor.

The enzyme catalyses S-(5-deoxy-D-ribos-5-yl)-L-homocysteine = (S)-4,5-dihydroxypentane-2,3-dione + L-homocysteine. Functionally, involved in the synthesis of autoinducer 2 (AI-2) which is secreted by bacteria and is used to communicate both the cell density and the metabolic potential of the environment. The regulation of gene expression in response to changes in cell density is called quorum sensing. Catalyzes the transformation of S-ribosylhomocysteine (RHC) to homocysteine (HC) and 4,5-dihydroxy-2,3-pentadione (DPD). The chain is S-ribosylhomocysteine lyase from Salmonella typhi.